A 185-amino-acid polypeptide reads, in one-letter code: Ribosome-recycling factor (185 aa).

It belongs to the RRF family.

It is found in the cytoplasm. Functionally, responsible for the release of ribosomes from messenger RNA at the termination of protein biosynthesis. May increase the efficiency of translation by recycling ribosomes from one round of translation to another. This chain is Ribosome-recycling factor, found in Idiomarina loihiensis (strain ATCC BAA-735 / DSM 15497 / L2-TR).